The following is a 192-amino-acid chain: Probable Brix domain-containing ribosomal biogenesis protein (192 aa).

One can recognise a Brix domain in the interval 2–191 (RPAAITTSQR…DFRTKDERMK (190 aa)).

Functionally, probably involved in the biogenesis of the ribosome. The polypeptide is Probable Brix domain-containing ribosomal biogenesis protein (Methanopyrus kandleri (strain AV19 / DSM 6324 / JCM 9639 / NBRC 100938)).